The following is a 162-amino-acid chain: Peptidyl-prolyl cis-trans isomerase-like 1 (162 aa).

Residues 1 to 155 (MTTNIVLETT…EEVKIVKARV (155 aa)) form the PPIase cyclophilin-type domain.

The protein belongs to the cyclophilin-type PPIase family. PPIL1 subfamily.

It catalyses the reaction [protein]-peptidylproline (omega=180) = [protein]-peptidylproline (omega=0). Its function is as follows. PPIases accelerate the folding of proteins. It catalyzes the cis-trans isomerization of proline imidic peptide bonds in oligopeptides. This is Peptidyl-prolyl cis-trans isomerase-like 1 (CYP1) from Gibberella zeae (strain ATCC MYA-4620 / CBS 123657 / FGSC 9075 / NRRL 31084 / PH-1) (Wheat head blight fungus).